A 171-amino-acid chain; its full sequence is Shikimate kinase (171 aa).

14–19 (GAGKST) provides a ligand contact to ATP. Ser18 is a binding site for Mg(2+). The substrate site is built by Asp36, Arg60, and Gly82. An ATP-binding site is contributed by Arg120. Arg139 is a binding site for substrate. Position 156 (Gln156) interacts with ATP.

It belongs to the shikimate kinase family. In terms of assembly, monomer. Mg(2+) serves as cofactor.

The protein resides in the cytoplasm. It catalyses the reaction shikimate + ATP = 3-phosphoshikimate + ADP + H(+). The protein operates within metabolic intermediate biosynthesis; chorismate biosynthesis; chorismate from D-erythrose 4-phosphate and phosphoenolpyruvate: step 5/7. Functionally, catalyzes the specific phosphorylation of the 3-hydroxyl group of shikimic acid using ATP as a cosubstrate. The chain is Shikimate kinase from Alteromonas mediterranea (strain DSM 17117 / CIP 110805 / LMG 28347 / Deep ecotype).